The following is a 237-amino-acid chain: 1-(5-phosphoribosyl)-5-[(5-phosphoribosylamino)methylideneamino] imidazole-4-carboxamide isomerase (237 aa).

The active-site Proton acceptor is the aspartate 8. Aspartate 129 (proton donor) is an active-site residue.

This sequence belongs to the HisA/HisF family.

The protein resides in the cytoplasm. The enzyme catalyses 1-(5-phospho-beta-D-ribosyl)-5-[(5-phospho-beta-D-ribosylamino)methylideneamino]imidazole-4-carboxamide = 5-[(5-phospho-1-deoxy-D-ribulos-1-ylimino)methylamino]-1-(5-phospho-beta-D-ribosyl)imidazole-4-carboxamide. It functions in the pathway amino-acid biosynthesis; L-histidine biosynthesis; L-histidine from 5-phospho-alpha-D-ribose 1-diphosphate: step 4/9. The protein is 1-(5-phosphoribosyl)-5-[(5-phosphoribosylamino)methylideneamino] imidazole-4-carboxamide isomerase of Alkaliphilus metalliredigens (strain QYMF).